Reading from the N-terminus, the 266-residue chain is Indole-3-glycerol phosphate synthase (266 aa).

The protein belongs to the TrpC family.

It carries out the reaction 1-(2-carboxyphenylamino)-1-deoxy-D-ribulose 5-phosphate + H(+) = (1S,2R)-1-C-(indol-3-yl)glycerol 3-phosphate + CO2 + H2O. It functions in the pathway amino-acid biosynthesis; L-tryptophan biosynthesis; L-tryptophan from chorismate: step 4/5. The polypeptide is Indole-3-glycerol phosphate synthase (Acidovorax sp. (strain JS42)).